The sequence spans 210 residues: Large ribosomal subunit protein uL16 (210 aa).

This sequence belongs to the universal ribosomal protein uL16 family. In terms of assembly, component of the large ribosomal subunit. Mature ribosomes consist of a small (40S) and a large (60S) subunit. The 40S subunit contains about 33 different proteins and 1 molecule of RNA (18S). The 60S subunit contains about 49 different proteins and 3 molecules of RNA (28S, 5.8S and 5S).

The protein localises to the cytoplasm. Its function is as follows. Component of the large ribosomal subunit. Plays a role in the formation of actively translating ribosomes. Functionally, (Microbial infection) Seems to bind to the leucine zipper of viral and cellular JUN. This is Large ribosomal subunit protein uL16 from Gallus gallus (Chicken).